Here is a 604-residue protein sequence, read N- to C-terminus: Choline transporter-like protein 3 (604 aa).

2 N-linked (GlcNAc...) asparagine glycosylation sites follow: asparagine 90 and asparagine 103. The next 5 membrane-spanning stretches (helical) occupy residues 165 to 185 (DTIL…LFTF), 195 to 215 (IIIS…WWLY), 237 to 257 (LAFA…IFTL), 286 to 306 (LWTF…LLSL), and 330 to 350 (YLWW…LTCQ). Residues asparagine 454 and asparagine 472 are each glycosylated (N-linked (GlcNAc...) asparagine). 2 helical membrane passes run 485–505 (FIIF…GLMA) and 514–534 (VWAI…HSFL). Polar residues predominate over residues 581 to 592 (NARSQGHKNSLP). Positions 581-604 (NARSQGHKNSLPNEEGTELRPIVR) are disordered.

It belongs to the CTL (choline transporter-like) family. In terms of tissue distribution, expressed in colon, kidney and ileum.

Its subcellular location is the membrane. The chain is Choline transporter-like protein 3 (Slc44a3) from Rattus norvegicus (Rat).